The chain runs to 317 residues: Beta-ketoacyl-[acyl-carrier-protein] synthase III (317 aa).

Residues C112 and H244 contribute to the active site. The segment at 245–249 (QANLR) is ACP-binding. Residue N274 is part of the active site.

Belongs to the thiolase-like superfamily. FabH family. As to quaternary structure, homodimer.

The protein resides in the cytoplasm. The catalysed reaction is malonyl-[ACP] + acetyl-CoA + H(+) = 3-oxobutanoyl-[ACP] + CO2 + CoA. It functions in the pathway lipid metabolism; fatty acid biosynthesis. Its function is as follows. Catalyzes the condensation reaction of fatty acid synthesis by the addition to an acyl acceptor of two carbons from malonyl-ACP. Catalyzes the first condensation reaction which initiates fatty acid synthesis and may therefore play a role in governing the total rate of fatty acid production. Possesses both acetoacetyl-ACP synthase and acetyl transacylase activities. Its substrate specificity determines the biosynthesis of branched-chain and/or straight-chain of fatty acids. The sequence is that of Beta-ketoacyl-[acyl-carrier-protein] synthase III from Shigella sonnei (strain Ss046).